A 278-amino-acid polypeptide reads, in one-letter code: Protein NIF3 homolog (278 aa).

Belongs to the GTP cyclohydrolase I type 2/NIF3 family.

The chain is Protein NIF3 homolog from Schizosaccharomyces pombe (strain 972 / ATCC 24843) (Fission yeast).